The sequence spans 295 residues: Protoheme IX farnesyltransferase (295 aa).

Helical transmembrane passes span 24–43, 47–69, 94–114, 117–137, 144–164, 171–191, 216–236, 241–261, and 272–292; these read IMYL…PGSI, LALI…NMWY, SALE…AIAV, ISAI…TIWL, NIVI…AVVT, GFVL…ALSL, KYIL…ALFL, FYLG…VSIM, and MFSY…LCSI.

Belongs to the UbiA prenyltransferase family. Protoheme IX farnesyltransferase subfamily.

It is found in the cell membrane. The enzyme catalyses heme b + (2E,6E)-farnesyl diphosphate + H2O = Fe(II)-heme o + diphosphate. It participates in porphyrin-containing compound metabolism; heme O biosynthesis; heme O from protoheme: step 1/1. Converts heme B (protoheme IX) to heme O by substitution of the vinyl group on carbon 2 of heme B porphyrin ring with a hydroxyethyl farnesyl side group. The polypeptide is Protoheme IX farnesyltransferase (Wolbachia sp. subsp. Brugia malayi (strain TRS)).